Consider the following 186-residue polypeptide: MKISAFDIRPGNILEYEKGLWRVLKTDFVKPGKGGAFVQVEMKNIETGTKSNTRFRSGEAMEKAVVEPRTMQYLYADATGYVFMDNENFEQLILSEDLLEGQTGYLLPNTEIQVNLHNERPIGVELPPVVILEVREAEPSIKGQTATGSYKSAQMETGITVMVPQFVNAGEKIRVNTVDGSYIDRA.

An N6-(3,6-diaminohexanoyl)-5-hydroxylysine modification is found at Lys-33.

This sequence belongs to the elongation factor P family. Post-translationally, may be beta-lysylated on the epsilon-amino group of Lys-33 by the combined action of EpmA and EpmB, and then hydroxylated on the C5 position of the same residue by EpmC (if this protein is present). Lysylation is critical for the stimulatory effect of EF-P on peptide-bond formation. The lysylation moiety may extend toward the peptidyltransferase center and stabilize the terminal 3-CCA end of the tRNA. Hydroxylation of the C5 position on Lys-33 may allow additional potential stabilizing hydrogen-bond interactions with the P-tRNA.

Its subcellular location is the cytoplasm. The protein operates within protein biosynthesis; polypeptide chain elongation. Functionally, involved in peptide bond synthesis. Alleviates ribosome stalling that occurs when 3 or more consecutive Pro residues or the sequence PPG is present in a protein, possibly by augmenting the peptidyl transferase activity of the ribosome. Modification of Lys-33 is required for alleviation. This is Elongation factor P from Acidithiobacillus ferrooxidans (strain ATCC 23270 / DSM 14882 / CIP 104768 / NCIMB 8455) (Ferrobacillus ferrooxidans (strain ATCC 23270)).